Consider the following 1574-residue polypeptide: DNA-directed RNA polymerase subunit beta' (1574 aa).

Positions 64, 66, 79, and 82 each coordinate Zn(2+). Mg(2+) is bound by residues Asp-590, Asp-592, and Asp-594. The Zn(2+) site is built by Cys-928, Cys-1002, Cys-1009, and Cys-1012.

The protein belongs to the RNA polymerase beta' chain family. The RNAP catalytic core consists of 2 alpha, 1 beta, 1 beta' and 1 omega subunit. When a sigma factor is associated with the core the holoenzyme is formed, which can initiate transcription. Mg(2+) is required as a cofactor. The cofactor is Zn(2+).

The catalysed reaction is RNA(n) + a ribonucleoside 5'-triphosphate = RNA(n+1) + diphosphate. Its function is as follows. DNA-dependent RNA polymerase catalyzes the transcription of DNA into RNA using the four ribonucleoside triphosphates as substrates. In Aquifex aeolicus (strain VF5), this protein is DNA-directed RNA polymerase subunit beta'.